Here is a 2515-residue protein sequence, read N- to C-terminus: Probable maltase-glucoamylase 2 (2515 aa).

At Met1 to Glu9 the chain is on the cytoplasmic side. The chain crosses the membrane as a helical span at residues Val10 to Val30. The Lumenal segment spans residues Leu31–Val482. In terms of domain architecture, P-type 1 spans Pro41–Trp88. Cystine bridges form between Cys43–Cys72, Cys54–Cys71, and Cys65–Cys84. The tract at residues Ser152–Val865 is maltase. An N-linked (GlcNAc...) asparagine glycan is attached at Asn167. Tyr371 carries the post-translational modification Sulfotyrosine. Asn421 carries N-linked (GlcNAc...) asparagine glycosylation. Residue Glu478 is the Nucleophile of the active site. The active site involves Glu481. Intrachain disulfides connect Cys608–Cys619, Cys916–Cys933, and Cys928–Cys946. Residue Asn613 is glycosylated (N-linked (GlcNAc...) asparagine). The P-type 2 domain occupies Trp904–Thr950. The segment at Pro1023 to Ser1766 is glucoamylase. A Sulfotyrosine modification is found at Tyr1238. Catalysis depends on Asp1375, which acts as the Nucleophile. Glu1378 is an active-site residue. 3 disordered regions span residues Thr1816–Thr1901, Ser1994–Ala2015, and Thr2037–Thr2091. Over residues Pro1817–Pro1831 the composition is skewed to polar residues. Residues Ser1832 to Thr1901 show a composition bias toward low complexity. N-linked (GlcNAc...) asparagine glycosylation is present at Asn2249.

Belongs to the glycosyl hydrolase 31 family.

The protein resides in the membrane. The enzyme catalyses Hydrolysis of terminal (1-&gt;4)-linked alpha-D-glucose residues successively from non-reducing ends of the chains with release of beta-D-glucose.. This chain is Probable maltase-glucoamylase 2, found in Homo sapiens (Human).